The chain runs to 234 residues: tRNA1(Val) (adenine(37)-N6)-methyltransferase (234 aa).

It belongs to the methyltransferase superfamily. tRNA (adenine-N(6)-)-methyltransferase family.

The protein resides in the cytoplasm. The catalysed reaction is adenosine(37) in tRNA1(Val) + S-adenosyl-L-methionine = N(6)-methyladenosine(37) in tRNA1(Val) + S-adenosyl-L-homocysteine + H(+). In terms of biological role, specifically methylates the adenine in position 37 of tRNA(1)(Val) (anticodon cmo5UAC). The chain is tRNA1(Val) (adenine(37)-N6)-methyltransferase from Flavobacterium psychrophilum (strain ATCC 49511 / DSM 21280 / CIP 103535 / JIP02/86).